Consider the following 1342-residue polypeptide: DNA-directed RNA polymerase subunit beta (1342 aa).

It belongs to the RNA polymerase beta chain family. The RNAP catalytic core consists of 2 alpha, 1 beta, 1 beta' and 1 omega subunit. When a sigma factor is associated with the core the holoenzyme is formed, which can initiate transcription.

The enzyme catalyses RNA(n) + a ribonucleoside 5'-triphosphate = RNA(n+1) + diphosphate. DNA-dependent RNA polymerase catalyzes the transcription of DNA into RNA using the four ribonucleoside triphosphates as substrates. This is DNA-directed RNA polymerase subunit beta from Edwardsiella ictaluri (strain 93-146).